The following is a 62-amino-acid chain: U10-hottentoxin-Hj2a (62 aa).

The signal sequence occupies residues 1–22 (MQKLLIILILFCILKFNVDVEG). Intrachain disulfides connect cysteine 28-cysteine 46, cysteine 33-cysteine 59, and cysteine 37-cysteine 61.

The protein belongs to the short scorpion toxin superfamily. Potassium channel inhibitor family. Alpha-KTx 23 subfamily. Expressed by the venom gland.

It is found in the secreted. Its function is as follows. May block potassium channels. The polypeptide is U10-hottentoxin-Hj2a (Hottentotta judaicus (Black scorpion)).